We begin with the raw amino-acid sequence, 342 residues long: UDP-N-acetylglucosamine--N-acetylmuramyl-(pentapeptide) pyrophosphoryl-undecaprenol N-acetylglucosamine transferase (342 aa).

Residues 10-12, N124, S177, and Q275 each bind UDP-N-acetyl-alpha-D-glucosamine; that span reads TGG.

The protein belongs to the glycosyltransferase 28 family. MurG subfamily.

It localises to the cell inner membrane. The catalysed reaction is di-trans,octa-cis-undecaprenyl diphospho-N-acetyl-alpha-D-muramoyl-L-alanyl-D-glutamyl-meso-2,6-diaminopimeloyl-D-alanyl-D-alanine + UDP-N-acetyl-alpha-D-glucosamine = di-trans,octa-cis-undecaprenyl diphospho-[N-acetyl-alpha-D-glucosaminyl-(1-&gt;4)]-N-acetyl-alpha-D-muramoyl-L-alanyl-D-glutamyl-meso-2,6-diaminopimeloyl-D-alanyl-D-alanine + UDP + H(+). The protein operates within cell wall biogenesis; peptidoglycan biosynthesis. Cell wall formation. Catalyzes the transfer of a GlcNAc subunit on undecaprenyl-pyrophosphoryl-MurNAc-pentapeptide (lipid intermediate I) to form undecaprenyl-pyrophosphoryl-MurNAc-(pentapeptide)GlcNAc (lipid intermediate II). The sequence is that of UDP-N-acetylglucosamine--N-acetylmuramyl-(pentapeptide) pyrophosphoryl-undecaprenol N-acetylglucosamine transferase from Campylobacter jejuni subsp. doylei (strain ATCC BAA-1458 / RM4099 / 269.97).